The sequence spans 503 residues: Probable cytosol aminopeptidase (503 aa).

Residues Lys-270 and Asp-275 each contribute to the Mn(2+) site. The active site involves Lys-282. 3 residues coordinate Mn(2+): Asp-293, Asp-352, and Glu-354. Arg-356 is an active-site residue.

The protein belongs to the peptidase M17 family. Mn(2+) is required as a cofactor.

It is found in the cytoplasm. The catalysed reaction is Release of an N-terminal amino acid, Xaa-|-Yaa-, in which Xaa is preferably Leu, but may be other amino acids including Pro although not Arg or Lys, and Yaa may be Pro. Amino acid amides and methyl esters are also readily hydrolyzed, but rates on arylamides are exceedingly low.. It carries out the reaction Release of an N-terminal amino acid, preferentially leucine, but not glutamic or aspartic acids.. Presumably involved in the processing and regular turnover of intracellular proteins. Catalyzes the removal of unsubstituted N-terminal amino acids from various peptides. The sequence is that of Probable cytosol aminopeptidase from Salmonella arizonae (strain ATCC BAA-731 / CDC346-86 / RSK2980).